A 132-amino-acid polypeptide reads, in one-letter code: Small ribosomal subunit protein uS13 (132 aa).

The tract at residues 106-132 (PVRGQVTQKNARTRKGPRKTVAGKKGK) is disordered. The segment covering 116–132 (ARTRKGPRKTVAGKKGK) has biased composition (basic residues).

The protein belongs to the universal ribosomal protein uS13 family. In terms of assembly, part of the 30S ribosomal subunit. Forms a loose heterodimer with protein S19. Forms two bridges to the 50S subunit in the 70S ribosome.

In terms of biological role, located at the top of the head of the 30S subunit, it contacts several helices of the 16S rRNA. In the 70S ribosome it contacts the 23S rRNA (bridge B1a) and protein L5 of the 50S subunit (bridge B1b), connecting the 2 subunits; these bridges are implicated in subunit movement. Contacts the tRNAs in the A and P-sites. The sequence is that of Small ribosomal subunit protein uS13 from Mycoplasmopsis pulmonis (strain UAB CTIP) (Mycoplasma pulmonis).